A 264-amino-acid chain; its full sequence is Cell division protein DivIB (264 aa).

The Cytoplasmic segment spans residues 1 to 23 (MAVYEERIPQVKQQRPRRRGNRK). A helical transmembrane segment spans residues 24-44 (LVFLLVLFFLTILIIVFIRSP). Topologically, residues 45–264 (YSKVQEIRVT…GQEQPQQPQQ (220 aa)) are extracellular. In terms of domain architecture, POTRA spans 46-114 (SKVQEIRVTG…GLITLHITEQ (69 aa)).

Belongs to the FtsQ/DivIB family. DivIB subfamily.

The protein resides in the cell membrane. Functionally, cell division protein that may be involved in stabilizing or promoting the assembly of the division complex. In Brevibacillus brevis (strain 47 / JCM 6285 / NBRC 100599), this protein is Cell division protein DivIB.